Here is a 375-residue protein sequence, read N- to C-terminus: 23S rRNA (uracil(747)-C(5))-methyltransferase RlmC (375 aa).

Cysteine 3, cysteine 11, cysteine 14, and cysteine 87 together coordinate [4Fe-4S] cluster. Residues glutamine 212, phenylalanine 241, glutamate 262, and asparagine 307 each contribute to the S-adenosyl-L-methionine site. Cysteine 334 functions as the Nucleophile in the catalytic mechanism.

It belongs to the class I-like SAM-binding methyltransferase superfamily. RNA M5U methyltransferase family. RlmC subfamily.

It carries out the reaction uridine(747) in 23S rRNA + S-adenosyl-L-methionine = 5-methyluridine(747) in 23S rRNA + S-adenosyl-L-homocysteine + H(+). Catalyzes the formation of 5-methyl-uridine at position 747 (m5U747) in 23S rRNA. This Escherichia coli O157:H7 protein is 23S rRNA (uracil(747)-C(5))-methyltransferase RlmC.